We begin with the raw amino-acid sequence, 327 residues long: MSESKLDVTLWPSVNQLTNPLVKHLVDNAKALRLLVEKLPSGATIIDAGIKAEGGLEAGRLIAEICMGGLGHVNLHSSSTFPHWPWTLSVHSNNPVLSCLGSQYAGWSLSHEKFFSLGSGPGRALAGREELYKELGYKDSADAAVLVLESDKVPPQEVIEKVARDTGVNPENLTFILTPTRSLAGTVQIVARVLEVALHKIHTLHFPLEHVVDGAASAPLPPPAPDFLIGMGRTNDAILFGGHAHIFVKGSDEAAAKLAKELPSSASRDYGRPFAEVFKAVNMDFYKIDPMLFSPAAVTVTAVESGKSFIGGKLDATLLDQSFGYSA.

Belongs to the MCH family.

The protein resides in the cytoplasm. The enzyme catalyses 5,10-methenyl-5,6,7,8-tetrahydromethanopterin + H2O = N(5)-formyl-5,6,7,8-tetrahydromethanopterin + H(+). Its pathway is one-carbon metabolism; formaldehyde degradation; formate from formaldehyde (H(4)MPT route): step 3/5. Functionally, catalyzes the hydrolysis of methenyl-H(4)MPT(+) to 5-formyl-H(4)MPT. This is Methenyltetrahydromethanopterin cyclohydrolase (mch) from Methylobacillus flagellatus (strain ATCC 51484 / DSM 6875 / VKM B-1610 / KT).